We begin with the raw amino-acid sequence, 187 residues long: Probable chorismate pyruvate-lyase (187 aa).

3 residues coordinate substrate: arginine 77, leucine 115, and glutamate 174.

This sequence belongs to the UbiC family.

Its subcellular location is the cytoplasm. The catalysed reaction is chorismate = 4-hydroxybenzoate + pyruvate. Its pathway is cofactor biosynthesis; ubiquinone biosynthesis. Functionally, removes the pyruvyl group from chorismate, with concomitant aromatization of the ring, to provide 4-hydroxybenzoate (4HB) for the ubiquinone pathway. The protein is Probable chorismate pyruvate-lyase of Shewanella sp. (strain ANA-3).